The chain runs to 123 residues: Small ribosomal subunit protein uS12 (123 aa).

The segment at 1–32 is disordered; sequence MPTINQLVRHGRKRSVKKTNTPALKASPQKRG. Position 89 is a 3-methylthioaspartic acid (D89).

This sequence belongs to the universal ribosomal protein uS12 family. Part of the 30S ribosomal subunit. Contacts proteins S8 and S17. May interact with IF1 in the 30S initiation complex.

With S4 and S5 plays an important role in translational accuracy. Functionally, interacts with and stabilizes bases of the 16S rRNA that are involved in tRNA selection in the A site and with the mRNA backbone. Located at the interface of the 30S and 50S subunits, it traverses the body of the 30S subunit contacting proteins on the other side and probably holding the rRNA structure together. The combined cluster of proteins S8, S12 and S17 appears to hold together the shoulder and platform of the 30S subunit. This Desulfatibacillum aliphaticivorans protein is Small ribosomal subunit protein uS12.